The following is a 452-amino-acid chain: 1,4-beta-D-glucan cellobiohydrolase A (452 aa).

The signal sequence occupies residues 1–17 (MHQRALLFSALLTAVRA). N-linked (GlcNAc...) asparagine glycosylation occurs at Asn-62. Glu-227 functions as the Nucleophile in the catalytic mechanism. Glu-232 serves as the catalytic Proton donor. Residues Asn-285, Asn-335, Asn-402, and Asn-445 are each glycosylated (N-linked (GlcNAc...) asparagine).

This sequence belongs to the glycosyl hydrolase 7 (cellulase C) family.

It localises to the secreted. The catalysed reaction is Hydrolysis of (1-&gt;4)-beta-D-glucosidic linkages in cellulose and cellotetraose, releasing cellobiose from the non-reducing ends of the chains.. The biological conversion of cellulose to glucose generally requires three types of hydrolytic enzymes: (1) Endoglucanases which cut internal beta-1,4-glucosidic bonds; (2) Exocellobiohydrolases that cut the disaccharide cellobiose from the non-reducing end of the cellulose polymer chain; (3) Beta-1,4-glucosidases which hydrolyze the cellobiose and other short cello-oligosaccharides to glucose. The polypeptide is 1,4-beta-D-glucan cellobiohydrolase A (cbhA) (Aspergillus niger).